The sequence spans 449 residues: Trigger factor (449 aa).

In terms of domain architecture, PPIase FKBP-type spans 173-258 (GDRVTVDFVG…MKKVEWPHLP (86 aa)).

It belongs to the FKBP-type PPIase family. Tig subfamily.

The protein resides in the cytoplasm. It carries out the reaction [protein]-peptidylproline (omega=180) = [protein]-peptidylproline (omega=0). Involved in protein export. Acts as a chaperone by maintaining the newly synthesized protein in an open conformation. Functions as a peptidyl-prolyl cis-trans isomerase. This Burkholderia thailandensis (strain ATCC 700388 / DSM 13276 / CCUG 48851 / CIP 106301 / E264) protein is Trigger factor.